The chain runs to 407 residues: Serine hydroxymethyltransferase (407 aa).

Pyridoxal 5'-phosphate contacts are provided by residues Tyr51 and Gly94–Ser95. Residues Leu117 and Gly121–Leu123 contribute to the (6S)-5,6,7,8-tetrahydrofolate site. Residues Ser172, His200, and His225 each coordinate pyridoxal 5'-phosphate. An N6-(pyridoxal phosphate)lysine modification is found at Lys226. Glu242 serves as a coordination point for (6S)-5,6,7,8-tetrahydrofolate. Gly258 is a pyridoxal 5'-phosphate binding site.

It belongs to the SHMT family. As to quaternary structure, homodimer. Pyridoxal 5'-phosphate serves as cofactor.

Its subcellular location is the cytoplasm. The catalysed reaction is (6R)-5,10-methylene-5,6,7,8-tetrahydrofolate + glycine + H2O = (6S)-5,6,7,8-tetrahydrofolate + L-serine. The protein operates within one-carbon metabolism; tetrahydrofolate interconversion. Its pathway is amino-acid biosynthesis; glycine biosynthesis; glycine from L-serine: step 1/1. Catalyzes the reversible interconversion of serine and glycine with tetrahydrofolate (THF) serving as the one-carbon carrier. This reaction serves as the major source of one-carbon groups required for the biosynthesis of purines, thymidylate, methionine, and other important biomolecules. Also exhibits THF-independent aldolase activity toward beta-hydroxyamino acids, producing glycine and aldehydes, via a retro-aldol mechanism. This Thermus thermophilus (strain ATCC 27634 / DSM 579 / HB8) protein is Serine hydroxymethyltransferase.